Here is a 354-residue protein sequence, read N- to C-terminus: 2-methylisoborneol synthase (354 aa).

The segment at Met-1–Pro-29 is disordered. 6 residues coordinate Mg(2+): Asp-113, Asp-114, Glu-118, Asn-264, Ser-268, and Glu-272.

This sequence belongs to the terpene synthase family. 2-methylisoborneol synthase subfamily. It depends on Mg(2+) as a cofactor.

It carries out the reaction (E)-2-methylgeranyl diphosphate + H2O = 2-methylisoborneol + diphosphate. In terms of biological role, catalyzes the cyclization of 2-methylgeranyl diphosphate (2-MeGPP) to 2-methylisoborneol (2-MIB), which likely involves the intermediacy of 2-methyllinalyl diphosphate. In Saccharopolyspora erythraea (strain ATCC 11635 / DSM 40517 / JCM 4748 / NBRC 13426 / NCIMB 8594 / NRRL 2338), this protein is 2-methylisoborneol synthase.